Reading from the N-terminus, the 484-residue chain is Gasdermin-D (484 aa).

Tyr37 is modified (phosphotyrosine). Residue Cys56 is modified to S-(2-succinyl)cysteine. 2 beta stranded membrane passes run 91-97 (QGSVELA) and 103-108 (KIAGGA). Tyr158 carries the phosphotyrosine modification. 2 beta stranded membrane passes run 180–186 (GSGRFSL) and 191–197 (CLQGEGQ). At Ser185 the chain carries Phosphoserine. Cys191 and Cys268 each carry S-(2-succinyl)cysteine. Cys191 is lipidated: S-palmitoyl cysteine. A linker helix loop region spans residues 277–296 (VPAEGAFTEDFQGLRAEVET). Cys309 is modified (S-(2-succinyl)cysteine). Residue Ser338 is glycosylated (O-linked (GlcNAc) serine). The residue at position 467 (Cys467) is an S-(2-succinyl)cysteine.

This sequence belongs to the gasdermin family. In terms of assembly, homooligomer; homooligomeric ring-shaped pore complex containing 27-28 subunits when inserted in the membrane. Homooligomerization is promoted by the mTORC1 complex in macrophages. In response to a canonical inflammasome stimulus, such as nigericin, recruited to NLRP3 inflammasone with similar kinetics to that of uncleaved CASP1 precursor. Although this recruitment is also observed in the absence of PYCARD, it is more efficient in its presence. In terms of processing, cleavage at Asp-275 by CASP1 (mature and uncleaved precursor forms), CASP4, CASP5 or CASP8 relieves autoinhibition and is sufficient to initiate pyroptosis. Cleavage by CASP1 and CASP4 is not strictly dependent on the consensus cleavage site on GSDMD but depends on an exosite interface on CASP1 that recognizes and binds the Gasdermin-D, C-terminal (GSDMD-CT) part. Cleavage by CASP8 takes place following inactivation of MAP3K7/TAK1 by Yersinia toxin YopJ. Cleavage at Asp-87 by CASP3 or CASP7 inactivates the ability to mediate pyroptosis, but generates the Gasdermin-D, p13 chain, which translocates to the nucleus and acts as a transcription regulator. Cleavage by papain allergen generates the Gasdermin-D, p40 chain. Post-translationally, palmitoylated at Cys-191 by ZDHHC5 and ZDHHC9 in response to microbial infection and danger signals. Palmitoylation takes place before cleavage by caspases (CASP1, CASP4, CASP5 or CASP8) and is required for membrane translocation and pore formation. Depalmitoylated by LYPLA2. Succination of Cys-191 by the Krebs cycle intermediate fumarate, which leads to S-(2-succinyl)cysteine residues, inhibits processing by caspases, and ability to initiate pyroptosis. Succination modification is catalyzed by a non-enzymatic reaction caused by an accumulation of fumarate. In terms of processing, glycosylated: O-GlcNAcylation by OGT leads to reduced cleavage by CASP4 and decreased LPS-induced endothelial cell pyroptosis. Post-translationally, (Microbial infection) Cleaved and inactivated by Protease 3C from Human enterovirus 71 (EV71), preventing GSDMD-mediated pyroptosis. (Microbial infection) Cleaved and inactivated by the 3C-like proteinase nsp5 from human coronavirus SARS-CoV-2, preventing GSDMD-mediated pyroptosis. In terms of processing, (Microbial infection) Ubiquitinated by S.flexneri IpaH7.8, leading to its degradation by the proteasome. In terms of tissue distribution, expressed in the suprabasal cells of esophagus, as well as in the isthmus/neck, pit, and gland of the stomach, suggesting preferential expression in differentiating cells.

It is found in the cytoplasm. Its subcellular location is the cytosol. The protein resides in the inflammasome. It localises to the cell membrane. The protein localises to the secreted. It is found in the mitochondrion membrane. Its subcellular location is the nucleus. Its activity is regulated as follows. The full-length protein before cleavage is inactive: intramolecular interactions between N- and C-terminal domains mediate autoinhibition in the absence of activation signal. The intrinsic pyroptosis-inducing activity is carried by the released N-terminal moiety (Gasdermin-D, N-terminal) following cleavage by caspases CASP1, CASP4, CASP5 or CASP8. Cleavage at Asp-87 by CASP3 or CASP7 inactivates the ability to mediate pyroptosis. Homooligomerization and pore formation is specifically inhibited by VHH(GSDMD-1) and, to a lesser extent, VHH(GSDMD-2) nanobodies, protecting against excessive pyroptosis. Inhibited by small molecule NU6300, which covalently reacts with Cys-191, thereby preventing palmitoylation and pyroptosis. In terms of biological role, precursor of a pore-forming protein that plays a key role in host defense against pathogen infection and danger signals. This form constitutes the precursor of the pore-forming protein: upon cleavage, the released N-terminal moiety (Gasdermin-D, N-terminal) binds to membranes and forms pores, triggering pyroptosis. Promotes pyroptosis in response to microbial infection and danger signals. Produced by the cleavage of gasdermin-D by inflammatory caspases CASP1, CASP4 or CASP5 in response to canonical, as well as non-canonical (such as cytosolic LPS) inflammasome activators. After cleavage, moves to the plasma membrane where it strongly binds to inner leaflet lipids, including monophosphorylated phosphatidylinositols, such as phosphatidylinositol 4-phosphate, bisphosphorylated phosphatidylinositols, such as phosphatidylinositol (4,5)-bisphosphate, as well as phosphatidylinositol (3,4,5)-bisphosphate, and more weakly to phosphatidic acid and phosphatidylserine. Homooligomerizes within the membrane and forms pores of 10-15 nanometers (nm) of inner diameter, allowing the release of mature interleukin-1 (IL1B and IL18) and triggering pyroptosis. Gasdermin pores also allow the release of mature caspase-7 (CASP7). In some, but not all, cells types, pyroptosis is followed by pyroptotic cell death, which is caused by downstream activation of ninjurin-1 (NINJ1), which mediates membrane rupture (cytolysis). Also forms pores in the mitochondrial membrane, resulting in release of mitochondrial DNA (mtDNA) into the cytosol. Gasdermin-D, N-terminal released from pyroptotic cells into the extracellular milieu rapidly binds to and kills both Gram-negative and Gram-positive bacteria, without harming neighboring mammalian cells, as it does not disrupt the plasma membrane from the outside due to lipid-binding specificity. Under cell culture conditions, also active against intracellular bacteria, such as Listeria monocytogenes. Also active in response to MAP3K7/TAK1 inactivation by Yersinia toxin YopJ, which triggers cleavage by CASP8 and subsequent activation. Required for mucosal tissue defense against enteric pathogens. Activation of the non-canonical inflammasome in brain endothelial cells can lead to excessive pyroptosis, leading to blood-brain barrier breakdown. Strongly binds to bacterial and mitochondrial lipids, including cardiolipin. Does not bind to unphosphorylated phosphatidylinositol, phosphatidylethanolamine nor phosphatidylcholine. Functionally, transcription coactivator produced by the cleavage by CASP3 or CASP7 in the upper small intestine in response to dietary antigens. Required to maintain food tolerance in small intestine: translocates to the nucleus and acts as a coactivator for STAT1 to induce the transcription of CIITA and MHC class II molecules, which in turn induce type 1 regulatory T (Tr1) cells in upper small intestine. Its function is as follows. Produced by the cleavage by papain allergen. After cleavage, moves to the plasma membrane and homooligomerizes within the membrane and forms pores of 10-15 nanometers (nm) of inner diameter, allowing the specific release of mature interleukin-33 (IL33), promoting type 2 inflammatory immune response. This chain is Gasdermin-D, found in Homo sapiens (Human).